Reading from the N-terminus, the 569-residue chain is Urease subunit alpha (569 aa).

The region spanning 131–569 (GAIDSHIHFI…LPLAQRYLLL (439 aa)) is the Urease domain. Residues His-136, His-138, and Lys-219 each contribute to the Ni(2+) site. An N6-carboxylysine modification is found at Lys-219. His-221 is a substrate binding site. Residues His-248 and His-274 each contribute to the Ni(2+) site. The active-site Proton donor is His-322. Asp-362 is a binding site for Ni(2+).

It belongs to the metallo-dependent hydrolases superfamily. Urease alpha subunit family. Heterotrimer of UreA (gamma), UreB (beta) and UreC (alpha) subunits. Three heterotrimers associate to form the active enzyme. It depends on Ni cation as a cofactor. Carboxylation allows a single lysine to coordinate two nickel ions.

It is found in the cytoplasm. It carries out the reaction urea + 2 H2O + H(+) = hydrogencarbonate + 2 NH4(+). It participates in nitrogen metabolism; urea degradation; CO(2) and NH(3) from urea (urease route): step 1/1. The polypeptide is Urease subunit alpha (Prochlorococcus marinus (strain NATL2A)).